The following is a 602-amino-acid chain: Wings apart-like protein homolog 1 (602 aa).

Residues 34–66 are disordered; sequence NKQKRSPGQTVSKRLHKKQRVVSNPDLSLPSSP. Positions 54–66 are enriched in polar residues; sequence VVSNPDLSLPSSP. The WAPL domain occupies 160–492; sequence IQMKSIHELR…LGLVEESHEF (333 aa).

Belongs to the WAPL family.

The protein resides in the nucleus. Its subcellular location is the chromosome. Its function is as follows. Regulator of sister chromatid cohesion in mitosis which negatively regulates cohesin association with chromatin. This Schizosaccharomyces pombe (strain 972 / ATCC 24843) (Fission yeast) protein is Wings apart-like protein homolog 1 (wpl1).